The sequence spans 721 residues: Ribonuclease R (721 aa).

Positions 249–587 (RRSIIDREII…VHRLLWMFIF (339 aa)) constitute an RNB domain. An S1 motif domain is found at 639–719 (GKEFIGVVTT…LTRKIDFELV (81 aa)).

The protein belongs to the RNR ribonuclease family. RNase R subfamily.

The protein resides in the cytoplasm. It carries out the reaction Exonucleolytic cleavage in the 3'- to 5'-direction to yield nucleoside 5'-phosphates.. In terms of biological role, 3'-5' exoribonuclease that releases 5'-nucleoside monophosphates and is involved in maturation of structured RNAs. The sequence is that of Ribonuclease R from Ureaplasma parvum serovar 3 (strain ATCC 700970).